A 904-amino-acid chain; its full sequence is UPF0182 protein CKL_0015 (904 aa).

The next 7 membrane-spanning stretches (helical) occupy residues 9–29 (SLIV…DFII), 47–67 (LIAI…SIVL), 96–116 (IFII…AATY), 157–177 (ILSL…TLSV), 208–228 (LAVL…LKCI), 253–273 (YKII…SILV), and 279–299 (IIVS…SYTV).

The protein belongs to the UPF0182 family.

It is found in the cell membrane. This Clostridium kluyveri (strain ATCC 8527 / DSM 555 / NBRC 12016 / NCIMB 10680 / K1) protein is UPF0182 protein CKL_0015.